The following is a 284-amino-acid chain: Urease accessory protein UreD (284 aa).

The disordered stretch occupies residues 1–28 (MQSEQQAIGASGCEDAQQPVRQQRARGR).

It belongs to the UreD family. As to quaternary structure, ureD, UreF and UreG form a complex that acts as a GTP-hydrolysis-dependent molecular chaperone, activating the urease apoprotein by helping to assemble the nickel containing metallocenter of UreC. The UreE protein probably delivers the nickel.

The protein resides in the cytoplasm. Its function is as follows. Required for maturation of urease via the functional incorporation of the urease nickel metallocenter. The protein is Urease accessory protein UreD of Agrobacterium fabrum (strain C58 / ATCC 33970) (Agrobacterium tumefaciens (strain C58)).